Here is a 157-residue protein sequence, read N- to C-terminus: MSDDNQTKLEAADIQALLAVLPHRYPFLLIDRIVDIDGDVSATGIKNVTINEPHFTGHFPENPIMPGVLIVEAMAQTAGAISLLQRKTGRPGVVYFMTIDSAKFRRPVVPGDRLLLYVKKIKQRANISKYECVAEVDGVKVAEAEVAAMISVADENL.

The active site involves His-58.

Belongs to the thioester dehydratase family. FabZ subfamily.

It localises to the cytoplasm. It catalyses the reaction a (3R)-hydroxyacyl-[ACP] = a (2E)-enoyl-[ACP] + H2O. Its function is as follows. Involved in unsaturated fatty acids biosynthesis. Catalyzes the dehydration of short chain beta-hydroxyacyl-ACPs and long chain saturated and unsaturated beta-hydroxyacyl-ACPs. The polypeptide is 3-hydroxyacyl-[acyl-carrier-protein] dehydratase FabZ (Brucella melitensis biotype 2 (strain ATCC 23457)).